We begin with the raw amino-acid sequence, 463 residues long: MSNKMWGGRFTERPDEIMEDINVSIDVDRHLYAQDIAASKAHAAMLAAQGIITSGDAKNMARGLDTILSEITKGSFEFKRALEDIHMNVESRLSELIGPAAGRLHTARSRNDQVATDFRLFVRDEIDDIDAALAAYQQALATRALEFAGTVMPGFTHLQTAQPVTFGHHLLAYVEMAGRDRGRFADARERLNESPLGAAALAGTSFPIDRHATAQALGFDRPMANSLDAVSDRDFVLETLSAASICAVHLSRFAEEIVIWTSPLVGLIKLSDKFTTGSSIMPQKRNPDAAELVRAKTGRVIGALNGLLIVMKGLPLAYQKDMQEDKQGAMEAFAALSLAIRAMTGMALDLVPDEARMKAAAGEGYATATDLADWLVRTLKMPFREAHHVTGRIVALASKQGVALHELPLEAMQEVEPKITADVLGVLSVEASVKSRTSFGGTAPKNVASQAKAWLKRLEKQRK.

This sequence belongs to the lyase 1 family. Argininosuccinate lyase subfamily.

It localises to the cytoplasm. It catalyses the reaction 2-(N(omega)-L-arginino)succinate = fumarate + L-arginine. It participates in amino-acid biosynthesis; L-arginine biosynthesis; L-arginine from L-ornithine and carbamoyl phosphate: step 3/3. In Bradyrhizobium sp. (strain ORS 278), this protein is Argininosuccinate lyase.